The chain runs to 90 residues: MVRPGLRSRSLRRVYRRTPGGSTVVHYERRKPGPARCARCGRPLGGVPRGRPPRVRRLSKTAKRPERPYGGVLCSTCLAEMIFEAIAGSS.

The segment at 38 to 65 is disordered; sequence ARCGRPLGGVPRGRPPRVRRLSKTAKRP. Residues 51–62 are compositionally biased toward basic residues; that stretch reads RPPRVRRLSKTA.

It belongs to the eukaryotic ribosomal protein eL34 family.

This Aeropyrum pernix (strain ATCC 700893 / DSM 11879 / JCM 9820 / NBRC 100138 / K1) protein is Large ribosomal subunit protein eL34 (rpl34e).